The following is a 199-amino-acid chain: Guanylate kinase (199 aa).

The Guanylate kinase-like domain maps to 20–198; that stretch reads GKLIVLTGPS…ALQAIEVALF (179 aa). Position 27–34 (27–34) interacts with ATP; the sequence is GPSGVGKG.

This sequence belongs to the guanylate kinase family.

It localises to the cytoplasm. The catalysed reaction is GMP + ATP = GDP + ADP. Its function is as follows. Essential for recycling GMP and indirectly, cGMP. The sequence is that of Guanylate kinase from Trichormus variabilis (strain ATCC 29413 / PCC 7937) (Anabaena variabilis).